Reading from the N-terminus, the 411-residue chain is Multifunctional CCA protein (411 aa).

Gly8 and Arg11 together coordinate ATP. Gly8 and Arg11 together coordinate CTP. Residues Asp21 and Asp23 each coordinate Mg(2+). Residues Arg91, Arg143, and Arg146 each coordinate ATP. Residues Arg91, Arg143, and Arg146 each contribute to the CTP site. Residues 232–333 (TGVHVMMVID…MRLLERCDAL (102 aa)) enclose the HD domain.

Belongs to the tRNA nucleotidyltransferase/poly(A) polymerase family. Bacterial CCA-adding enzyme type 1 subfamily. Monomer. Can also form homodimers and oligomers. Mg(2+) is required as a cofactor. Ni(2+) serves as cofactor.

The enzyme catalyses a tRNA precursor + 2 CTP + ATP = a tRNA with a 3' CCA end + 3 diphosphate. It carries out the reaction a tRNA with a 3' CCA end + 2 CTP + ATP = a tRNA with a 3' CCACCA end + 3 diphosphate. In terms of biological role, catalyzes the addition and repair of the essential 3'-terminal CCA sequence in tRNAs without using a nucleic acid template. Adds these three nucleotides in the order of C, C, and A to the tRNA nucleotide-73, using CTP and ATP as substrates and producing inorganic pyrophosphate. tRNA 3'-terminal CCA addition is required both for tRNA processing and repair. Also involved in tRNA surveillance by mediating tandem CCA addition to generate a CCACCA at the 3' terminus of unstable tRNAs. While stable tRNAs receive only 3'-terminal CCA, unstable tRNAs are marked with CCACCA and rapidly degraded. This chain is Multifunctional CCA protein, found in Cupriavidus necator (strain ATCC 17699 / DSM 428 / KCTC 22496 / NCIMB 10442 / H16 / Stanier 337) (Ralstonia eutropha).